The sequence spans 153 residues: SKP1-like protein 9 (153 aa).

An interaction with the F-box domain of F-box proteins region spans residues 95 to 153 (IKAANYLNIKSLFDLACQTVAEIIKGNTPEQIREFFNIENDLTPEEEAAIRRENKWAFE).

This sequence belongs to the SKP1 family. Part of a SCF (SKP1-cullin-F-box) protein ligase complex. Interacts with CPR1/CPR30 and At3g61590. As to expression, expressed in leaves, shoot apical meristem (SAM), roots, flowers and pollen.

It localises to the nucleus. It participates in protein modification; protein ubiquitination. In terms of biological role, involved in ubiquitination and subsequent proteasomal degradation of target proteins. Together with CUL1, RBX1 and a F-box protein, it forms a SCF E3 ubiquitin ligase complex. The functional specificity of this complex depends on the type of F-box protein. In the SCF complex, it serves as an adapter that links the F-box protein to CUL1. The protein is SKP1-like protein 9 (ASK9) of Arabidopsis thaliana (Mouse-ear cress).